The following is a 227-amino-acid chain: MTVIAPVITIDGPSGAGKGTLCKALAETLQWHLLDSGAIYRVLVLAALHHQVAIDSEEALVPLATHLDVRFEVEQGKLSVVLEGEDVSQAIRNETVGNTASQIAAFPRVREALLRRQRAFRAAPGLIADGRDMGTVVFPDAPVKIFLDASSDERAYRRMRQLQEKGFSVNFERLLSEIKERDDRDRNRAVAPLVPAADALVLDSTRLTIDEVIAKALAHARQILALS.

Residue 12–20 (GPSGAGKGT) coordinates ATP.

It belongs to the cytidylate kinase family. Type 1 subfamily.

The protein localises to the cytoplasm. It carries out the reaction CMP + ATP = CDP + ADP. It catalyses the reaction dCMP + ATP = dCDP + ADP. The protein is Cytidylate kinase of Sodalis glossinidius (strain morsitans).